The following is a 440-amino-acid chain: Peroxisome proliferator-activated receptor delta (440 aa).

The disordered stretch occupies residues 1–53; sequence MEQPQEETPEAREEEKEEVAMGDGAPELNGGPEHTLPSSSCADLSQNSSPSSL. Over residues 36–53 the composition is skewed to polar residues; it reads LPSSSCADLSQNSSPSSL. Positions 70–144 form a DNA-binding region, nuclear receptor; the sequence is NMECRVCGDK…LGMSHNAIRF (75 aa). 2 consecutive NR C4-type zinc fingers follow at residues 73–93 and 110–132; these read CRVCGDKASGFHYGVHACEGC and CDRICKIQKKNRNKCQYCRFQKC. Positions 210–438 constitute an NR LBD domain; sequence FVIHDIETLW…HPLLQEIYKD (229 aa).

It belongs to the nuclear hormone receptor family. NR1 subfamily. As to quaternary structure, heterodimer with the retinoid X receptor. Interacts (via domain NR LBD) with CRY1 and CRY2 in a ligand-dependent manner. 'Lys-48'-linked polyubiquitinated; leading to proteasomal degradation. Deubiquitinated and stabilized by OTUD3. In terms of tissue distribution, heart, adrenal and intestine.

The protein resides in the nucleus. Ligand-activated transcription factor key mediator of energy metabolism in adipose tissues. Receptor that binds peroxisome proliferators such as hypolipidemic drugs and fatty acids. Has a preference for poly-unsaturated fatty acids, such as gamma-linoleic acid and eicosapentanoic acid. Once activated by a ligand, the receptor binds to promoter elements of target genes. Regulates the peroxisomal beta-oxidation pathway of fatty acids. Functions as transcription activator for the acyl-CoA oxidase gene. Decreases expression of NPC1L1 once activated by a ligand. The chain is Peroxisome proliferator-activated receptor delta (Ppard) from Mus musculus (Mouse).